Reading from the N-terminus, the 249-residue chain is Uridylate kinase (249 aa).

21-24 (KLSG) provides a ligand contact to ATP. Residue glycine 63 participates in UMP binding. ATP is bound by residues glycine 64 and arginine 68. UMP is bound by residues aspartate 84 and 145 to 152 (TGNPFVTT). Residues threonine 172, tyrosine 178, and aspartate 181 each contribute to the ATP site.

This sequence belongs to the UMP kinase family. Homohexamer.

The protein resides in the cytoplasm. The catalysed reaction is UMP + ATP = UDP + ADP. It participates in pyrimidine metabolism; CTP biosynthesis via de novo pathway; UDP from UMP (UMPK route): step 1/1. Inhibited by UTP. Its function is as follows. Catalyzes the reversible phosphorylation of UMP to UDP. This Francisella tularensis subsp. tularensis (strain FSC 198) protein is Uridylate kinase.